The primary structure comprises 145 residues: uncharacterized protein (145 aa).

This is an uncharacterized protein from Saccharomyces cerevisiae (strain ATCC 204508 / S288c) (Baker's yeast).